Consider the following 190-residue polypeptide: Histone H5 (190 aa).

The tract at residues 1–29 (MTESLVLSPAPAKPKRVKASRRSASHPTY) is disordered. Basic residues predominate over residues 13–24 (KPKRVKASRRSA). Residues serine 23, serine 30, serine 146, and serine 167 each carry the phosphoserine modification. The H15 domain maps to 25–98 (SHPTYSEMIA…GASGSFRLAK (74 aa)). The segment at 87-190 (GVGASGSFRL…SGARKSPKKK (104 aa)) is disordered. A compositionally biased stretch (basic residues) spans 104–190 (RSPGKKKKAV…SGARKSPKKK (87 aa)).

It belongs to the histone H1/H5 family. In terms of tissue distribution, erythroid cells.

The protein localises to the nucleus. It is found in the chromosome. In terms of biological role, histone H5 performs the same function as H1, being necessary for the condensation of nucleosome chains into higher order structures, and replaces histone H1 in certain cells. The protein is Histone H5 of Gallus gallus (Chicken).